The primary structure comprises 382 residues: MSNATNNTLGSLLPQLEAAANSNSLYGGMVPNLRFNITMIVIWGILLTIHVVQLLMRQYWFSIAFICTGILEVLGFIGRTWSHSNVADMDAFLLNMICLTIAPVFTMGGIYYQLAKLIEVYGHRFSLLPSPMAYSFIFICSDIVSLVVQAVGGGLCGVAVTDGTSTTTGNHVFIAGLAIQVASMAIFLMLWFHFLFRIYISVRWEHINSRPISLSLLKISQTEVDYLYREKFHFLRLEPKRWVFHYFNLAITVAVLTIFTRCCYRLAELVVGWDGYLITHEWYFIILDALMMAIATVTLTIFHPGFAFKGRSTSIPITPGHVDPETLPHTDDVEDILDTSDSKQFDIEKEEFQASMKYPISTFKQFMSKIANLFSSKKKAKL.

Topologically, residues methionine 1–arginine 34 are extracellular. Residues asparagine 3 and asparagine 6 are each glycosylated (N-linked (GlcNAc...) asparagine). The chain crosses the membrane as a helical span at residues phenylalanine 35–leucine 55. Residues methionine 56–arginine 57 are Cytoplasmic-facing. A helical membrane pass occupies residues glutamine 58–glycine 78. Residues arginine 79 to aspartate 90 lie on the Extracellular side of the membrane. The chain crosses the membrane as a helical span at residues alanine 91–tyrosine 111. Residues tyrosine 112–serine 135 are Cytoplasmic-facing. Residues phenylalanine 136–cysteine 156 form a helical membrane-spanning segment. Topologically, residues glycine 157–histidine 171 are extracellular. Residues valine 172 to phenylalanine 192 form a helical membrane-spanning segment. The Cytoplasmic portion of the chain corresponds to histidine 193–arginine 241. Residues tryptophan 242–cysteine 262 form a helical membrane-spanning segment. The Extracellular segment spans residues cysteine 263–glutamate 281. The helical transmembrane segment at tryptophan 282–phenylalanine 302 threads the bilayer. The Cytoplasmic portion of the chain corresponds to histidine 303–leucine 382.

This sequence belongs to the lipid-translocating exporter (LTE) (TC 9.A.26.1) family.

Its subcellular location is the cell membrane. In terms of biological role, catalyzes the ATP-dependent translocation of sphingoid long-chain bases (LCBs) from the cytoplasmic site toward the extracytoplasmic side of the membrane (flip-flop). Involved in the establishment of the functional lipid asymmetry of the plasma membrane. Regulates intracellular levels of LCBs, sphingolipid precursors that are growth inhibitory at increased levels. The sequence is that of Sphingoid long-chain base transporter RSB1 (RSB1) from Saccharomyces cerevisiae (strain ATCC 204508 / S288c) (Baker's yeast).